Here is an 827-residue protein sequence, read N- to C-terminus: Copper-transporting ATPase 2 (827 aa).

HMA domains follow at residues 15 to 80 (VSTN…YAPR) and 82 to 148 (ATEE…YELR). The Cu cation site is built by Cys-26, Cys-29, Cys-93, and Cys-96. Helical transmembrane passes span 174 to 194 (VTIS…SHFI), 210 to 230 (NLYL…LRFF), 246 to 266 (SLVV…TFVP), 271 to 291 (SGTA…VLLG), 430 to 450 (GWFV…WYTF), and 458 to 478 (FALV…MGLA). Residue Asp-515 is the 4-aspartylphosphate intermediate of the active site. Residues Asp-714 and Asp-718 each coordinate Mg(2+). A run of 2 helical transmembrane segments spans residues 771 to 793 (NLFW…LYPV) and 797 to 819 (LLSP…GNAL).

It belongs to the cation transport ATPase (P-type) (TC 3.A.3) family. Type IB subfamily.

It localises to the cell membrane. The catalysed reaction is Cu(2+)(in) + ATP + H2O = Cu(2+)(out) + ADP + phosphate + H(+). In terms of biological role, involved in copper transport. This Rhizobium meliloti (strain 1021) (Ensifer meliloti) protein is Copper-transporting ATPase 2 (actP2).